A 379-amino-acid chain; its full sequence is Phospho-N-acetylmuramoyl-pentapeptide-transferase (379 aa).

10 consecutive transmembrane segments (helical) span residues Phe-27–Val-47, Thr-76–Leu-96, Phe-100–Tyr-120, Ala-135–Gln-155, Pro-185–Gly-205, Gly-218–Ser-238, Val-255–Tyr-275, Phe-283–Ile-303, Leu-307–Val-327, and Lys-356–Leu-376.

It belongs to the glycosyltransferase 4 family. MraY subfamily. Mg(2+) serves as cofactor.

The protein localises to the cell inner membrane. The enzyme catalyses UDP-N-acetyl-alpha-D-muramoyl-L-alanyl-gamma-D-glutamyl-meso-2,6-diaminopimeloyl-D-alanyl-D-alanine + di-trans,octa-cis-undecaprenyl phosphate = di-trans,octa-cis-undecaprenyl diphospho-N-acetyl-alpha-D-muramoyl-L-alanyl-D-glutamyl-meso-2,6-diaminopimeloyl-D-alanyl-D-alanine + UMP. Its pathway is cell wall biogenesis; peptidoglycan biosynthesis. Its function is as follows. Catalyzes the initial step of the lipid cycle reactions in the biosynthesis of the cell wall peptidoglycan: transfers peptidoglycan precursor phospho-MurNAc-pentapeptide from UDP-MurNAc-pentapeptide onto the lipid carrier undecaprenyl phosphate, yielding undecaprenyl-pyrophosphoryl-MurNAc-pentapeptide, known as lipid I. This chain is Phospho-N-acetylmuramoyl-pentapeptide-transferase, found in Koribacter versatilis (strain Ellin345).